Consider the following 507-residue polypeptide: Variant surface glycoprotein ILTAT 1.25 (507 aa).

The signal sequence occupies residues 1–21; the sequence is MQSQQQPVFISIILLAINTDA. Residues 83–95 are compositionally biased toward basic and acidic residues; the sequence is EPEAAPKESRSDE. The interval 83–102 is disordered; that stretch reads EPEAAPKESRSDETPEACKA. N-linked (GlcNAc...) asparagine glycans are attached at residues N141 and N371. A compositionally biased stretch (low complexity) spans 384-395; the sequence is PTKQPPAKAAAA. The tract at residues 384–474 is disordered; that stretch reads PTKQPPAKAA…KKEEECKSPN (91 aa). Positions 396-420 are enriched in basic and acidic residues; that stretch reads PEKKSNPQKDCNKNTKKRDCKEGDG. The span at 444–455 shows a compositional bias: low complexity; it reads SAAGAGDAGASD. Basic and acidic residues predominate over residues 456–474; it reads TEAKKCSDKKKEEECKSPN. Residue D484 is the site of GPI-anchor amidated aspartate attachment. A propeptide spans 485–507 (removed in mature form); sequence SSILANKQFALSVASAAFVALLF.

It is found in the cell membrane. Functionally, VSG forms a coat on the surface of the parasite. The trypanosome evades the immune response of the host by expressing a series of antigenically distinct VSGs from an estimated 1000 VSG genes. The polypeptide is Variant surface glycoprotein ILTAT 1.25 (Trypanosoma brucei brucei).